The primary structure comprises 251 residues: NADPH-dependent oxidoreductase (251 aa).

This sequence belongs to the flavin oxidoreductase frp family. FMN is required as a cofactor.

Functionally, reduces FMN, organic nitro compounds and disulfide DTNB. Involved in maintenance of the cellular redox state and the disulfide stress response. This Staphylococcus saprophyticus subsp. saprophyticus (strain ATCC 15305 / DSM 20229 / NCIMB 8711 / NCTC 7292 / S-41) protein is NADPH-dependent oxidoreductase (nfrA).